The sequence spans 130 residues: Large ribosomal subunit protein bL20 (130 aa).

Belongs to the bacterial ribosomal protein bL20 family.

Functionally, binds directly to 23S ribosomal RNA and is necessary for the in vitro assembly process of the 50S ribosomal subunit. It is not involved in the protein synthesizing functions of that subunit. In Leifsonia xyli subsp. xyli (strain CTCB07), this protein is Large ribosomal subunit protein bL20.